Here is a 425-residue protein sequence, read N- to C-terminus: Bifunctional phosphoribosylaminoimidazole carboxylase/phosphoribosylaminoimidazole succinocarboxamide synthetase (425 aa).

Ala2 is subject to N-acetylalanine. The segment at 2-260 (ATAVVVNIGK…WVADRVELLL (259 aa)) is SAICAR synthetase domain. At Tyr22 the chain carries Phosphotyrosine. Lys36 carries the post-translational modification N6-acetyllysine. The residue at position 107 (Ser107) is a Phosphoserine. Thr238 is modified (phosphothreonine). N6-acetyllysine is present on Lys247. A linker region spans residues 261–266 (KSDSQC). Residues 267-425 (RVVVLMGSTS…ADKKVRQCNL (159 aa)) form an AIR carboxylase domain region. The residue at position 274 (Ser274) is a Phosphoserine. Ser332 is a binding site for CO2.

In the N-terminal section; belongs to the SAICAR synthetase family. This sequence in the C-terminal section; belongs to the AIR carboxylase family. Class II subfamily. As to quaternary structure, homooctamer.

It catalyses the reaction 5-amino-1-(5-phospho-D-ribosyl)imidazole-4-carboxylate + L-aspartate + ATP = (2S)-2-[5-amino-1-(5-phospho-beta-D-ribosyl)imidazole-4-carboxamido]succinate + ADP + phosphate + 2 H(+). It carries out the reaction 5-amino-1-(5-phospho-D-ribosyl)imidazole-4-carboxylate + H(+) = 5-amino-1-(5-phospho-beta-D-ribosyl)imidazole + CO2. It functions in the pathway purine metabolism; IMP biosynthesis via de novo pathway; 5-amino-1-(5-phospho-D-ribosyl)imidazole-4-carboxamide from 5-amino-1-(5-phospho-D-ribosyl)imidazole-4-carboxylate: step 1/2. The protein operates within purine metabolism; IMP biosynthesis via de novo pathway; 5-amino-1-(5-phospho-D-ribosyl)imidazole-4-carboxylate from 5-amino-1-(5-phospho-D-ribosyl)imidazole (carboxylase route): step 1/1. Its function is as follows. Bifunctional phosphoribosylaminoimidazole carboxylase and phosphoribosylaminoimidazole succinocarboxamide synthetase catalyzing two reactions of the de novo purine biosynthetic pathway. The protein is Bifunctional phosphoribosylaminoimidazole carboxylase/phosphoribosylaminoimidazole succinocarboxamide synthetase of Mus musculus (Mouse).